The primary structure comprises 680 residues: Viral IRF2-like protein (680 aa).

The segment at residues 7 to 103 (SEWLTDFIID…RPFTIYKGKM (97 aa)) is a DNA-binding region (IRF tryptophan pentad repeat). 4 disordered regions span residues 156–201 (SLRK…SENE), 220–257 (EEPEPSGFGSSGQSSSLLAPDSPRPSTSQVQGPLHVHT), 343–365 (ETASPQGPMQSEGGEEGSTESVS), and 403–423 (ASPQGPMQSEGGEEGSTESVS). The span at 168-188 (KQAAAVATPTTSSAAEVSSRS) shows a compositional bias: low complexity. The segment covering 191–200 (EDTESSDSEN) has biased composition (acidic residues). Low complexity predominate over residues 220 to 240 (EEPEPSGFGSSGQSSSLLAPD).

This sequence belongs to the IRF family. As to quaternary structure, interacts with host EIF2AK2/PKR. Interacts with host USP7.

It localises to the host nucleus. The protein resides in the host cytoplasm. Its function is as follows. DNA-binding transcription factor that plays a role in the modulation of host immune response. Acts by interacting with host EIF2AK2/PKR and inhibiting its activation. In turn, EIF2AK2/PKR substrates including EIF2S1 or histone H2A are not phosphorylated. Inhibits type I interferon signaling by targeting host IRF3 during viral reactivation from latency. Attenuates the transcriptional activity of host FOXO3 via activation of the AKT1 signaling pathway, inhibiting FOXO3-mediated apoptosis. Also suppresses the expression of viral early lytic genes in both newly infected and reactivated infected host cells allowing regulation of viral life cycle by harnessing the interferon pathway. Mechanistically, promotes host PML bodies formation as well as host antiviral restriction factors IFIT1-3 expression leading to inhibition of viral early lytic proteins. Also regulates host TRAF3 and TRAF6 ubiquitination by interacting with USP7 deubiquitinase thereby influencing TRAF3/6-mediated signal transduction. The protein is Viral IRF2-like protein (vIRF-2) of Human herpesvirus 8 type P (isolate GK18) (HHV-8).